We begin with the raw amino-acid sequence, 42 residues long: Envelope protein P10 (42 aa).

The chain crosses the membrane as a helical span at residues 20-40 (TTAAKIAVVYALVGLVGGLLL).

The protein resides in the virion membrane. Involved in cell lysis. This chain is Envelope protein P10 (P10), found in Pseudomonas savastanoi pv. phaseolicola (Pseudomonas syringae pv. phaseolicola).